The following is an 84-amino-acid chain: Exodeoxyribonuclease 7 small subunit (84 aa).

It belongs to the XseB family. Heterooligomer composed of large and small subunits.

The protein localises to the cytoplasm. It carries out the reaction Exonucleolytic cleavage in either 5'- to 3'- or 3'- to 5'-direction to yield nucleoside 5'-phosphates.. Bidirectionally degrades single-stranded DNA into large acid-insoluble oligonucleotides, which are then degraded further into small acid-soluble oligonucleotides. The polypeptide is Exodeoxyribonuclease 7 small subunit (Yersinia pseudotuberculosis serotype O:3 (strain YPIII)).